A 94-amino-acid chain; its full sequence is Na(+)/H(+) antiporter subunit F (94 aa).

Transmembrane regions (helical) follow at residues 2-22, 34-54, and 59-79; these read FTLILQIALGIMAVSTFLYVI, VVALDAIGINLIAITALVSIL, and AFLDIILLLGILSFIGTIAFS.

This sequence belongs to the CPA3 antiporters (TC 2.A.63) subunit F family. In terms of assembly, forms a heterooligomeric complex that consists of seven subunits: MrpA, MrpB, MrpC, MrpD, MrpE, MrpF and MrpG.

It is found in the cell membrane. Its function is as follows. Mrp complex is a Na(+)/H(+) antiporter that is considered to be the major Na(+) excretion system in B.subtilis. Has a major role in Na(+) resistance and a minor role in Na(+)- and K(+)-dependent pH homeostasis as compared to TetB. MrpA may be the actual Na(+)/H(+) antiporter, although the six other Mrp proteins are all required for Na(+)/H(+) antiport activity and Na(+) resistance. MrpA is required for initiation of sporulation when external Na(+) concentration increases. Also transports Li(+) but not K(+), Ca(2+) or Mg(2+). Functionally, involved in cholate and Na(+) efflux activities, which may be mechanistically coupled. Does not require other Mrp proteins for its own function. The protein is Na(+)/H(+) antiporter subunit F (mrpF) of Bacillus subtilis (strain 168).